The sequence spans 93 residues: UPF0250 protein PSPA7_1111 (93 aa).

This sequence belongs to the UPF0250 family.

The protein is UPF0250 protein PSPA7_1111 of Pseudomonas paraeruginosa (strain DSM 24068 / PA7) (Pseudomonas aeruginosa (strain PA7)).